The sequence spans 1123 residues: Eukaryotic translation initiation factor 2-alpha kinase PK4 (1123 aa).

Positions Met-1–Lys-30 are disordered. Residues Asn-21 to Lys-30 show a composition bias toward basic and acidic residues. ATP is bound by residues Ile-245–Val-253 and Lys-270. Disordered stretches follow at residues Phe-409–Gly-493, Arg-572–Asp-609, and Glu-742–Ile-800. Basic and acidic residues predominate over residues Lys-419 to His-428. A compositionally biased stretch (basic residues) spans His-455 to Ile-477. 5 repeat units span residues Asp-576 to Gly-582, Asp-583 to Gly-589, Asp-590 to Gly-596, Asp-597 to Gly-603, and Asp-604 to Asp-610. The 5 X 7 AA tandem repeat of D-K-N-[GE]-L-D-[GD] stretch occupies residues Asp-576–Asp-610. The region spanning Thr-678–Leu-1049 is the Protein kinase domain. The segment covering Asn-743–Asn-754 has biased composition (acidic residues). Asp-886 functions as the Proton acceptor in the catalytic mechanism. Thr-953 is modified (phosphothreonine).

It belongs to the protein kinase superfamily. Ser/Thr protein kinase family. GCN2 subfamily. As to quaternary structure, may form oligomers in response to stress; oligomerization may result in catalytic activity. Interacts with BIP; the interaction is disrupted in response to stress. Post-translationally, auto-phosphorylated.

The protein resides in the endoplasmic reticulum membrane. The enzyme catalyses L-seryl-[protein] + ATP = O-phospho-L-seryl-[protein] + ADP + H(+). It carries out the reaction L-threonyl-[protein] + ATP = O-phospho-L-threonyl-[protein] + ADP + H(+). With respect to regulation, dissociation from BIP and oligomerization, may results autophosphorylation and kinase activity induction. During the asexual blood stage, phosphorylates translation factor eIF2alpha in late schizonts resulting in protein translation inhibition. Plays a role in trophozoite differentiation into schizonts. The chain is Eukaryotic translation initiation factor 2-alpha kinase PK4 from Plasmodium falciparum.